Reading from the N-terminus, the 249-residue chain is Probable aquaporin TIP-type (249 aa).

2 helical membrane-spanning segments follow: residues 22–42 (AGLA…GSGI) and 56–76 (AGLI…VSVG). Residues 85–87 (NPA) carry the NPA 1 motif. The next 3 membrane-spanning stretches (helical) occupy residues 103-123 (IVYI…LVFV), 137-157 (VGVG…VYTV), and 169-189 (IGII…LVGG). Positions 197–199 (NPA) match the NPA 2 motif. A helical transmembrane segment spans residues 217 to 237 (YWAGPLIGGGIAGLVYEVLFI).

Belongs to the MIP/aquaporin (TC 1.A.8) family. TIP (TC 1.A.8.10) subfamily. In terms of tissue distribution, expression is highest in root tips, with slightly lower levels of hybridizing mRNA in stems, and whole roots, and much lower levels in nodules and leaves.

Its subcellular location is the membrane. Functionally, aquaporins facilitate the transport of water and small neutral solutes across cell membranes. The protein is Probable aquaporin TIP-type (MCP1) of Medicago sativa (Alfalfa).